The chain runs to 161 residues: Cytochrome c-type biogenesis protein CcmE (161 aa).

Over 1 to 8 (MNPRRQKR) the chain is Cytoplasmic. Residues 9-29 (LGIILAILIGVSATIGLMIYA) traverse the membrane as a helical; Signal-anchor for type II membrane protein segment. Over 30 to 161 (LNQNMDLFYT…SEEQKQGSGQ (132 aa)) the chain is Periplasmic. Heme contacts are provided by histidine 129 and tyrosine 133.

This sequence belongs to the CcmE/CycJ family.

Its subcellular location is the cell inner membrane. In terms of biological role, heme chaperone required for the biogenesis of c-type cytochromes. Transiently binds heme delivered by CcmC and transfers the heme to apo-cytochromes in a process facilitated by CcmF and CcmH. The sequence is that of Cytochrome c-type biogenesis protein CcmE from Vibrio vulnificus (strain CMCP6).